Here is a 418-residue protein sequence, read N- to C-terminus: Equilibrative nucleotide transporter 6 (418 aa).

11 helical membrane passes run 19–39, 56–76, 86–106, 112–132, 142–162, 186–206, 264–284, 291–311, 326–346, 353–373, and 392–412; these read AMIV…SMLT, VLTL…AYHE, LIGY…DLAT, FGPY…DATV, LMCP…GALT, MFLA…AYVL, HAVN…GFLY, GLGA…DLVG, KLIT…YFTA, WMIM…VCIM, and LVIF…LWLI.

It belongs to the SLC29A/ENT transporter (TC 2.A.57) family. In terms of tissue distribution, expressed in leaves and siliques.

Its subcellular location is the cell membrane. Its function is as follows. Nucleoside transporter that can mediate uptake of adenosine, uridine, guanosine or cytidine when expressed in a heterologous system (yeast). This Arabidopsis thaliana (Mouse-ear cress) protein is Equilibrative nucleotide transporter 6 (ENT6).